The sequence spans 566 residues: Urease subunit alpha (566 aa).

A Urease domain is found at 128-566 (GGVDTHIHFI…LPMAQRYFLF (439 aa)). 3 residues coordinate Ni(2+): His-133, His-135, and Lys-216. Residue Lys-216 is modified to N6-carboxylysine. Residue His-218 coordinates substrate. Ni(2+) is bound by residues His-245 and His-271. His-319 acts as the Proton donor in catalysis. Asp-359 contacts Ni(2+).

The protein belongs to the metallo-dependent hydrolases superfamily. Urease alpha subunit family. May form a heterohexamer of 3 UreC (alpha) and 3 UreAB (gamma/beta) subunits. May also form a heterotrimer of UreA (gamma), UreB (beta) and UreC (alpha) subunits. Three heterotrimers associate to form the active enzyme. The cofactor is Ni cation. Post-translationally, carboxylation allows a single lysine to coordinate two nickel ions.

Its subcellular location is the cytoplasm. It catalyses the reaction urea + 2 H2O + H(+) = hydrogencarbonate + 2 NH4(+). It functions in the pathway nitrogen metabolism; urea degradation; CO(2) and NH(3) from urea (urease route): step 1/1. This Pseudomonas syringae pv. tomato (strain ATCC BAA-871 / DC3000) protein is Urease subunit alpha.